We begin with the raw amino-acid sequence, 621 residues long: Chaperone protein HtpG (621 aa).

An a; substrate-binding region spans residues 1–341 (MSNQEYTFQT…SEDLPLNVSR (341 aa)). Residues 342-547 (EILQQNKILA…GDEQNAMMAN (206 aa)) form a b region. The c stretch occupies residues 548-621 (LMRQMGQNMP…RLNSVLLKAL (74 aa)).

The protein belongs to the heat shock protein 90 family. As to quaternary structure, homodimer.

It is found in the cytoplasm. Its function is as follows. Molecular chaperone. Has ATPase activity. The polypeptide is Chaperone protein HtpG (Helicobacter acinonychis (strain Sheeba)).